The following is a 164-amino-acid chain: tRNA (cytidine(34)-2'-O)-methyltransferase (164 aa).

4 residues coordinate S-adenosyl-L-methionine: Met80, Gly102, Val124, and Ser132.

The protein belongs to the class IV-like SAM-binding methyltransferase superfamily. RNA methyltransferase TrmH family. TrmL subfamily. As to quaternary structure, homodimer.

It is found in the cytoplasm. It catalyses the reaction cytidine(34) in tRNA + S-adenosyl-L-methionine = 2'-O-methylcytidine(34) in tRNA + S-adenosyl-L-homocysteine + H(+). The catalysed reaction is 5-carboxymethylaminomethyluridine(34) in tRNA(Leu) + S-adenosyl-L-methionine = 5-carboxymethylaminomethyl-2'-O-methyluridine(34) in tRNA(Leu) + S-adenosyl-L-homocysteine + H(+). Functionally, methylates the ribose at the nucleotide 34 wobble position in the two leucyl isoacceptors tRNA(Leu)(CmAA) and tRNA(Leu)(cmnm5UmAA). Catalyzes the methyl transfer from S-adenosyl-L-methionine to the 2'-OH of the wobble nucleotide. The chain is tRNA (cytidine(34)-2'-O)-methyltransferase from Polaromonas sp. (strain JS666 / ATCC BAA-500).